The sequence spans 194 residues: Cupin-domain-containing oxidoreductase virC (194 aa).

The region spanning 106–175 (IDFAPNVISP…GTLPGRMMWV (70 aa)) is the Cupin type-2 domain.

The protein belongs to the virC family.

The protein operates within secondary metabolite biosynthesis. In terms of biological role, cupin-domain-containing oxidoreductase; part of the gene cluster that mediates the biosynthesis of virensols and trichoxide, fungal natural products that contain or are derived from a salicylaldehyde core. The pathway begins with the synthesis of the reduced chain in virensol C by the highly reducing polyketide synthase virA via condensation of one acetate and 8 malonate units. VirA has interesting programming rules since the first 2 ketides are fully reduced, the 3 following ketides undergo beta-dehydration, and the last 3 ketides are only reduced to beta-hydroxys to yield the trihydroxy portion. The production of aldehyde virensol C by virA alone is surprising, since virA does not contain a reductase (R) domain that is typically associated with reductive product release in HRPKS. The cupin-domain enzyme virC is involved in enhancing virA product turnover. The short-chain dehydrogenase virB then oxidizes the C-7 alcohol of virensol C to a ketone, yielding virensol D. Virensol D is further transformed to salicylaldehyde 5-deoxyaurocitrin by the short-chain dehydrogenase virD. VirD catalyzes the dehydrogenation of C-3 to form the beta-ketone aldehyde, which is followed by the generation of the nucleophilic C-2 that is required for the intramolecular aldol condensation between C-2 and C-7, itself followed by dehydration and aromatization which leads to salicylaldehyde 5-deoxyaurocitrin. While the dehydrogenation of virensol D is definitely catalyzed by virD, the aldol condensation and dehydration may be uncatalyzed or assisted by virD. The short chain dehydrogenase virG then converts salicylaldehyde 5-deoxyaurocitrin into virensol B which is further hydroxylated by the cytochrome P450 monooxygenase virE to yield the hydroquinone virensol A. VirI then may oxidize virensol A to form the quinone, while virH performs the epoxidation. Finally, the two remaining short-chain dehydrogenases, virK and virL, are probably responsible for reducing the ketones to the corresponding alcohols to furnish the epoxycyclohexanol structure in trichoxide. The protein is Cupin-domain-containing oxidoreductase virC of Hypocrea virens (strain Gv29-8 / FGSC 10586) (Gliocladium virens).